The sequence spans 425 residues: Probable threonylcarbamoyladenosine tRNA methylthiotransferase (425 aa).

Residues 2–110 (VKVYIENYGC…IVQAVEYAMR (109 aa)) enclose the MTTase N-terminal domain. [4Fe-4S] cluster contacts are provided by Cys11, Cys47, Cys76, Cys148, Cys152, and Cys155. The Radical SAM core domain maps to 134 to 363 (SPRNVYFILP…HRIRLQISYE (230 aa)). A TRAM domain is found at 366 to 425 (RKYIGKKVKVLIHGEGKKGNVDAVTMNYKHIILPEGRKGEFREARVKNAASTYLLGEIIT).

It belongs to the methylthiotransferase family. CDKAL1 subfamily. Requires [4Fe-4S] cluster as cofactor.

The catalysed reaction is N(6)-L-threonylcarbamoyladenosine(37) in tRNA + (sulfur carrier)-SH + AH2 + 2 S-adenosyl-L-methionine = 2-methylsulfanyl-N(6)-L-threonylcarbamoyladenosine(37) in tRNA + (sulfur carrier)-H + 5'-deoxyadenosine + L-methionine + A + S-adenosyl-L-homocysteine + 2 H(+). Functionally, catalyzes the methylthiolation of N6-threonylcarbamoyladenosine (t(6)A), leading to the formation of 2-methylthio-N6-threonylcarbamoyladenosine (ms(2)t(6)A) at position 37 in tRNAs that read codons beginning with adenine. The sequence is that of Probable threonylcarbamoyladenosine tRNA methylthiotransferase from Pyrococcus horikoshii (strain ATCC 700860 / DSM 12428 / JCM 9974 / NBRC 100139 / OT-3).